An 81-amino-acid chain; its full sequence is Large ribosomal subunit protein uL29c (81 aa).

It belongs to the universal ribosomal protein uL29 family.

It localises to the plastid. Its subcellular location is the chloroplast. The sequence is that of Large ribosomal subunit protein uL29c from Phaeodactylum tricornutum (strain CCAP 1055/1).